Consider the following 311-residue polypeptide: Deacetoxycephalosporin C synthase (311 aa).

The 114-residue stretch at 154-267 folds into the Fe2OG dioxygenase domain; that stretch reads DCEPLLRFRY…RTSSVFFLRP (114 aa).

The protein belongs to the iron/ascorbate-dependent oxidoreductase family. The cofactor is Fe cation. Requires L-ascorbate as cofactor.

It carries out the reaction penicillin N + 2-oxoglutarate + O2 = deacetoxycephalosporin C + succinate + CO2 + H2O. Its pathway is antibiotic biosynthesis; cephalosporin C biosynthesis. Catalyzes the step from penicillin N to deacetoxy-cephalosporin C. The chain is Deacetoxycephalosporin C synthase (cefE) from Streptomyces clavuligerus.